The primary structure comprises 268 residues: Myeloid leukemia factor 1 (268 aa).

Residues Ser-6, Ser-8, and Ser-32 each carry the phosphoserine modification. The segment at 50-125 (RVHNRRGHND…IGDEPPKVFQ (76 aa)) is interaction with COPS3. Residues 208-268 (PGRHNLENTR…KGSSVKSNKK (61 aa)) are disordered. Composition is skewed to basic and acidic residues over residues 226 to 237 (PGSRELKRREKP) and 244 to 257 (EHGRRSDVLGDKLH).

The protein belongs to the MLF family. In terms of assembly, interacts with CENPU. Also interacts with NRBP1/MADM, YWHAZ/14-3-3-zeta and HNRPUL2/MANP. NRBP1 recruits a serine kinase which phosphorylates both itself and MLF1. Phosphorylated MLF1 then binds to YWHAZ and is retained in the cytoplasm. Retained in the nucleus by binding to HNRPUL2. Binds to COPS3/CSN3 which is required for suppression of COP1 and activation of p53. Post-translationally, phosphorylation is required for binding to YWHAZ.

The protein localises to the cytoplasm. Its subcellular location is the nucleus. It is found in the cell projection. The protein resides in the cilium. It localises to the cytoskeleton. The protein localises to the cilium basal body. Its function is as follows. Involved in lineage commitment of primary hemopoietic progenitors by restricting erythroid formation and enhancing myeloid formation. Interferes with erythropoietin-induced erythroid terminal differentiation by preventing cells from exiting the cell cycle through suppression of CDKN1B/p27Kip1 levels. Suppresses COP1 activity via CSN3 which activates p53 and induces cell cycle arrest. Binds DNA and affects the expression of a number of genes so may function as a transcription factor in the nucleus. The chain is Myeloid leukemia factor 1 (MLF1) from Pongo abelii (Sumatran orangutan).